The following is a 370-amino-acid chain: Dual-specificity RNA methyltransferase RlmN (370 aa).

Glutamate 93 acts as the Proton acceptor in catalysis. Positions 99–337 (EEGRGTLCVS…VTTVRKTRGD (239 aa)) constitute a Radical SAM core domain. Cysteines 106 and 343 form a disulfide. Residues cysteine 113, cysteine 117, and cysteine 120 each contribute to the [4Fe-4S] cluster site. S-adenosyl-L-methionine-binding positions include 167 to 168 (GE), serine 199, 221 to 223 (SLH), and asparagine 300. Residue cysteine 343 is the S-methylcysteine intermediate of the active site.

It belongs to the radical SAM superfamily. RlmN family. Requires [4Fe-4S] cluster as cofactor.

The protein localises to the cytoplasm. It catalyses the reaction adenosine(2503) in 23S rRNA + 2 reduced [2Fe-2S]-[ferredoxin] + 2 S-adenosyl-L-methionine = 2-methyladenosine(2503) in 23S rRNA + 5'-deoxyadenosine + L-methionine + 2 oxidized [2Fe-2S]-[ferredoxin] + S-adenosyl-L-homocysteine. The catalysed reaction is adenosine(37) in tRNA + 2 reduced [2Fe-2S]-[ferredoxin] + 2 S-adenosyl-L-methionine = 2-methyladenosine(37) in tRNA + 5'-deoxyadenosine + L-methionine + 2 oxidized [2Fe-2S]-[ferredoxin] + S-adenosyl-L-homocysteine. Functionally, specifically methylates position 2 of adenine 2503 in 23S rRNA and position 2 of adenine 37 in tRNAs. m2A2503 modification seems to play a crucial role in the proofreading step occurring at the peptidyl transferase center and thus would serve to optimize ribosomal fidelity. The polypeptide is Dual-specificity RNA methyltransferase RlmN (Francisella philomiragia subsp. philomiragia (strain ATCC 25017 / CCUG 19701 / FSC 153 / O#319-036)).